The sequence spans 1122 residues: Telomerase reverse transcriptase (1122 aa).

Positions 1–239 (MTRAPRCPAV…TKRHLSLTST (239 aa)) are RNA-interacting domain 1. Residues 58-205 (MHWGSQPPPA…RPVGRNFTNL (148 aa)) form a GQ motif region. The required for regulating specificity for telomeric DNA and for processivity for primer elongation stretch occupies residues 137–141 (WMLLL). Residues 213–296 (SSSRQEAPKP…KDLSSKGKVS (84 aa)) form a disordered region. The linker stretch occupies residues 240 to 328 (SVPSAKKARC…PRQNAFQLRP (89 aa)). Residues 284–295 (TAEKDLSSKGKV) show a composition bias toward basic and acidic residues. The segment at 306 to 528 (CKHKPSSTSL…VPAAEHRLRE (223 aa)) is required for oligomerization. The interval 329-540 (FIETRHFLYS…LATFLFWLMD (212 aa)) is RNA-interacting domain 2. A TFLY; involved in RNA binding motif is present at residues 332–337 (TRHFLY). The tract at residues 381–511 (LCRTHRLSRR…MKVEDCHWLR (131 aa)) is QFP motif. Residues 402–422 (LVNHAECQYVRLLRSHCRFRT) form a CP motif region. S447 carries the phosphoserine; by DYRK2 modification. One can recognise a Reverse transcriptase domain in the interval 595 to 928 (EVRHHQDTWL…CLFPWCGLLL (334 aa)). Phosphotyrosine; by SRC-type Tyr-kinases is present on Y697. Mg(2+) contacts are provided by D702, D861, and D862. The required for oligomerization stretch occupies residues 907-921 (LGGAAPYQLPAHCLF). The tract at residues 923-927 (WCGLL) is primer grip sequence. A CTE region spans residues 929-1122 (DTQTLEVFCD…LSTDFQTILD (194 aa)).

It belongs to the reverse transcriptase family. Telomerase subfamily. In terms of assembly, catalytic component of the telomerase holoenzyme complex composed of one molecule of TERT, one molecule of WRAP53/TCAB1, two molecules of H/ACA ribonucleoprotein complex subunits DKC1, NOP10, NHP2 and GAR1, and a telomerase RNA template component (TERC). The telomerase holoenzyme complex is associated with TEP1, SMG6/EST1A and POT1. The molecular chaperone HSP90/P23 complex is required for correct assembly and stabilization of the active telomerase. Interacts directly with HSP90A and PTGES3. Interacts with HSPA1A; the interaction occurs in the absence of TERC and dissociates once the complex has formed. Interacts with RAN; the interaction promotes nuclear export of TERT. Interacts with XPO1. Interacts with PTPN11; the interaction retains TERT in the nucleus. Interacts with NCL (via RRM1 and C-terminal RRM4/Arg/Gly-rich domains); the interaction is important for nucleolar localization of TERT. Interacts with SMARCA4 (via the bromodomain); the interaction regulates Wnt-mediated signaling. Interacts with MCRS1 (isoform MCRS2); the interaction inhibits in vitro telomerase activity. Interacts with PIF1; the interaction has no effect on the elongation activity of TERT. Interacts with PML; the interaction recruits TERT to PML bodies and inhibits telomerase activity. Interacts with GNL3L. Interacts with isoform 1 and isoform 2 of NVL. Interacts with DHX36. Interacts with ATF7. Phosphorylation at Tyr-697 under oxidative stress leads to translocation of TERT to the cytoplasm and reduces its antiapoptotic activity. Dephosphorylated by SHP2/PTPN11 leading to nuclear retention. Phosphorylation by the AKT pathway promotes nuclear location. Phosphorylation at the G2/M phase at Ser-447 by DYRK2 promotes ubiquitination by the EDVP complex and degradation. Post-translationally, ubiquitinated by the EDVP complex, a E3 ligase complex following phosphorylation at Ser-447 by DYRK2. Ubiquitinated leads to proteasomal degradation. As to expression, high activity in intestine, liver and testis, moderate in lung, very low in muscle, heart and brain.

The protein resides in the nucleus. It localises to the nucleolus. The protein localises to the nucleoplasm. It is found in the chromosome. Its subcellular location is the telomere. The protein resides in the cytoplasm. It localises to the PML body. It catalyses the reaction DNA(n) + a 2'-deoxyribonucleoside 5'-triphosphate = DNA(n+1) + diphosphate. Telomerase is a ribonucleoprotein enzyme essential for the replication of chromosome termini in most eukaryotes. Active in progenitor and cancer cells. Inactive, or very low activity, in normal somatic cells. Catalytic component of the teleromerase holoenzyme complex whose main activity is the elongation of telomeres by acting as a reverse transcriptase that adds simple sequence repeats to chromosome ends by copying a template sequence within the RNA component of the enzyme. Catalyzes the RNA-dependent extension of 3'-chromosomal termini with the 6-nucleotide telomeric repeat unit, 5'-TTAGGG-3'. The catalytic cycle involves primer binding, primer extension and release of product once the template boundary has been reached or nascent product translocation followed by further extension. More active on substrates containing 2 or 3 telomeric repeats. Telomerase activity is regulated by a number of factors including telomerase complex-associated proteins, chaperones and polypeptide modifiers. Modulates Wnt signaling. Plays important roles in aging and antiapoptosis. The sequence is that of Telomerase reverse transcriptase (Tert) from Mus musculus (Mouse).